Reading from the N-terminus, the 347-residue chain is Biotin synthase (347 aa).

The region spanning 54 to 273 (NHVETASLLS…IAVARIMMPK (220 aa)) is the Radical SAM core domain. Residues Cys-69, Cys-73, and Cys-76 each coordinate [4Fe-4S] cluster. 4 residues coordinate [2Fe-2S] cluster: Cys-113, Cys-144, Cys-204, and Arg-277.

This sequence belongs to the radical SAM superfamily. Biotin synthase family. As to quaternary structure, homodimer. [4Fe-4S] cluster is required as a cofactor. The cofactor is [2Fe-2S] cluster.

It carries out the reaction (4R,5S)-dethiobiotin + (sulfur carrier)-SH + 2 reduced [2Fe-2S]-[ferredoxin] + 2 S-adenosyl-L-methionine = (sulfur carrier)-H + biotin + 2 5'-deoxyadenosine + 2 L-methionine + 2 oxidized [2Fe-2S]-[ferredoxin]. The protein operates within cofactor biosynthesis; biotin biosynthesis; biotin from 7,8-diaminononanoate: step 2/2. In terms of biological role, catalyzes the conversion of dethiobiotin (DTB) to biotin by the insertion of a sulfur atom into dethiobiotin via a radical-based mechanism. In Afipia carboxidovorans (strain ATCC 49405 / DSM 1227 / KCTC 32145 / OM5) (Oligotropha carboxidovorans), this protein is Biotin synthase.